The sequence spans 337 residues: Glyceraldehyde-3-phosphate dehydrogenase (337 aa).

NAD(+) contacts are provided by residues 12-13 (RI), Asp34, and Lys79. D-glyceraldehyde 3-phosphate-binding positions include 150-152 (SCT), Thr181, 210-211 (TG), and Arg233. The active-site Nucleophile is Cys151. Asn315 provides a ligand contact to NAD(+).

This sequence belongs to the glyceraldehyde-3-phosphate dehydrogenase family. In terms of assembly, homotetramer.

It localises to the cytoplasm. The enzyme catalyses D-glyceraldehyde 3-phosphate + phosphate + NAD(+) = (2R)-3-phospho-glyceroyl phosphate + NADH + H(+). It functions in the pathway carbohydrate degradation; glycolysis; pyruvate from D-glyceraldehyde 3-phosphate: step 1/5. In Phaeosphaeria nodorum (strain SN15 / ATCC MYA-4574 / FGSC 10173) (Glume blotch fungus), this protein is Glyceraldehyde-3-phosphate dehydrogenase (GPD1).